Consider the following 463-residue polypeptide: NF-kappa-B-activating protein (463 aa).

Over residues 1–14 (MRSRSRSRSRQRER) the composition is skewed to basic residues. Residues 1–358 (MRSRSRSRSR…GGSLNQKDFG (358 aa)) form a disordered region. Basic and acidic residues-rich tracts occupy residues 15 to 29 (RRSD…ERRT) and 39 to 71 (VSRE…DAVP). The segment covering 78–98 (SSPSRSSSSSSSDRSSSSRSP) has biased composition (low complexity). Positions 107–125 (KSVERWPNDRYHENNDRRQ) are enriched in basic and acidic residues. 3 positions are modified to phosphoserine: Ser-136, Ser-189, and Ser-191. Thr-195 bears the Phosphothreonine mark. Residues 208-238 (PKKKKKKGKRKHKKSEKKSKKKSKKSKKKKS) are compositionally biased toward basic residues. A compositionally biased stretch (low complexity) spans 241–267 (ESSSSSSSSSSEDSSDESSSSSSSSSS). Over residues 268 to 278 (DSEDESEEEDV) the composition is skewed to acidic residues. Residues 279–288 (WLEKTADGIK) show a composition bias toward basic and acidic residues. Positions 289-312 (KPKKKKSSTSKKDKKSKKKKKKRK) are enriched in basic residues. Basic and acidic residues predominate over residues 330–340 (KNKESASHNDE).

Belongs to the NKAP family.

The protein resides in the nucleus. Its function is as follows. Tumor suppressor involved in maintaining genome integrity. Influences gene expression and mRNA splicing. This chain is NF-kappa-B-activating protein, found in Drosophila melanogaster (Fruit fly).